Reading from the N-terminus, the 137-residue chain is Small ribosomal subunit protein bS16m (137 aa).

The N-terminal 34 residues, 1 to 34 (MVHLTTLLCKAYRGGHLTIRLALGGCTNRPFYRI), are a transit peptide targeting the mitochondrion. At threonine 130 the chain carries Phosphothreonine.

It belongs to the bacterial ribosomal protein bS16 family. In terms of assembly, component of the mitochondrial small ribosomal subunit (mt-SSU). Mature mammalian 55S mitochondrial ribosomes consist of a small (28S) and a large (39S) subunit. The 28S small subunit contains a 12S ribosomal RNA (12S mt-rRNA) and 30 different proteins. The 39S large subunit contains a 16S rRNA (16S mt-rRNA), a copy of mitochondrial valine transfer RNA (mt-tRNA(Val)), which plays an integral structural role, and 52 different proteins. bS16m has a zinc binding site.

The protein localises to the mitochondrion. This chain is Small ribosomal subunit protein bS16m (MRPS16), found in Homo sapiens (Human).